We begin with the raw amino-acid sequence, 324 residues long: Elongation factor Ts, mitochondrial (324 aa).

A mitochondrion-targeting transit peptide spans 1 to 44 (MSLLRSLRFFPVACTGRSARAVLLQPSQPWLTFHAGPSLSSAAS). 3 positions are modified to N6-succinyllysine: Lys-75, Lys-132, and Lys-191. Ser-269 is subject to Phosphoserine.

It belongs to the EF-Ts family.

The protein localises to the mitochondrion. Associates with the EF-Tu.GDP complex and induces the exchange of GDP to GTP. It remains bound to the aminoacyl-tRNA.EF-Tu.GTP complex up to the GTP hydrolysis stage on the ribosome. This chain is Elongation factor Ts, mitochondrial (Tsfm), found in Mus musculus (Mouse).